The chain runs to 245 residues: 8-amino-3,8-dideoxy-manno-octulosonate cytidylyltransferase (245 aa).

Belongs to the KdsB family.

Its subcellular location is the cytoplasm. The enzyme catalyses 8-amino-3,8-dideoxy-alpha-D-manno-octulosonate + CTP = CMP-8-amino-3,8-dideoxy-alpha-D-manno-oct-2-ulosonate + diphosphate. It participates in bacterial outer membrane biogenesis; lipopolysaccharide biosynthesis. Functionally, activates KDO8N (a required 8-carbon sugar) for incorporation into bacterial lipopolysaccharide in the Shewanella genus. The protein is 8-amino-3,8-dideoxy-manno-octulosonate cytidylyltransferase of Shewanella sediminis (strain HAW-EB3).